Consider the following 332-residue polypeptide: MKPSDTRHIPVLGPEAVGLLAPRAGGIYVDGTFGAGGYTRLILETAGSRVIAIDRDPTAIAGGADLVADAGHRLTLVQDRFSNLADVCAAQGAATVDGVVMDIGVSSMQLDQAERGFSFRFDGPLDMRMGRDGPSAADVVARASETDLANIIYIFGEERYSRHVARAIVAARSDAPITTTKALADIVAKVVRAKPGEIHPATRTFQGLRIFVNEELDELHQALDAAERVLKPGGRLAVVSFHSLEDRIVKTFLTERSKTGGGSRHLPEVAQAAPSFTLLSKRPIVAGDAEVAANPRARSAKLRGAERTEAPAHAAGDLPGWPTLASVMRAGR.

S-adenosyl-L-methionine contacts are provided by residues 36–38 (GGY), D54, F81, D102, and Q109. The disordered stretch occupies residues 297–318 (ARSAKLRGAERTEAPAHAAGDL).

Belongs to the methyltransferase superfamily. RsmH family.

The protein resides in the cytoplasm. It carries out the reaction cytidine(1402) in 16S rRNA + S-adenosyl-L-methionine = N(4)-methylcytidine(1402) in 16S rRNA + S-adenosyl-L-homocysteine + H(+). In terms of biological role, specifically methylates the N4 position of cytidine in position 1402 (C1402) of 16S rRNA. The chain is Ribosomal RNA small subunit methyltransferase H from Rhodopseudomonas palustris (strain TIE-1).